A 231-amino-acid chain; its full sequence is Probable septum site-determining protein MinC (231 aa).

The segment at 100-125 is disordered; that stretch reads EGKEKSPRPAPAPQAPAQNTTPVTKT.

This sequence belongs to the MinC family. As to quaternary structure, interacts with MinD and FtsZ.

Functionally, cell division inhibitor that blocks the formation of polar Z ring septums. Rapidly oscillates between the poles of the cell to destabilize FtsZ filaments that have formed before they mature into polar Z rings. Prevents FtsZ polymerization. This chain is Probable septum site-determining protein MinC, found in Escherichia coli O81 (strain ED1a).